A 496-amino-acid chain; its full sequence is UDP-N-acetylmuramoyl-L-alanyl-D-glutamate--2,6-diaminopimelate ligase (496 aa).

Position 32 (Ser32) interacts with UDP-N-acetyl-alpha-D-muramoyl-L-alanyl-D-glutamate. Residue 116-122 coordinates ATP; sequence GTNGKTT. UDP-N-acetyl-alpha-D-muramoyl-L-alanyl-D-glutamate contacts are provided by residues 158-159, Ser185, Gln191, and Arg193; that span reads TT. At Lys225 the chain carries N6-carboxylysine. Meso-2,6-diaminopimelate contacts are provided by residues Arg389, 413 to 416, Gly464, and Glu468; that span reads DNPR. Residues 413 to 416 carry the Meso-diaminopimelate recognition motif motif; the sequence is DNPR.

Belongs to the MurCDEF family. MurE subfamily. Mg(2+) is required as a cofactor. Carboxylation is probably crucial for Mg(2+) binding and, consequently, for the gamma-phosphate positioning of ATP.

The protein resides in the cytoplasm. It catalyses the reaction UDP-N-acetyl-alpha-D-muramoyl-L-alanyl-D-glutamate + meso-2,6-diaminopimelate + ATP = UDP-N-acetyl-alpha-D-muramoyl-L-alanyl-gamma-D-glutamyl-meso-2,6-diaminopimelate + ADP + phosphate + H(+). Its pathway is cell wall biogenesis; peptidoglycan biosynthesis. Catalyzes the addition of meso-diaminopimelic acid to the nucleotide precursor UDP-N-acetylmuramoyl-L-alanyl-D-glutamate (UMAG) in the biosynthesis of bacterial cell-wall peptidoglycan. This Trichormus variabilis (strain ATCC 29413 / PCC 7937) (Anabaena variabilis) protein is UDP-N-acetylmuramoyl-L-alanyl-D-glutamate--2,6-diaminopimelate ligase.